Reading from the N-terminus, the 135-residue chain is uncharacterized protein (135 aa).

The interval 1–75 (MAAATETGQA…PPPRPPQRRC (75 aa)) is disordered.

This is an uncharacterized protein from Homo sapiens (Human).